The following is a 263-amino-acid chain: Syntaxin-73 (263 aa).

At 1-240 (MGVIDLITRV…TVTKLRSSRN (240 aa)) the chain is on the cytoplasmic side. A Phosphoserine modification is found at serine 12. One can recognise a t-SNARE coiled-coil homology domain in the interval 169-231 (YEMKRIKQAR…KSTNVRLKDT (63 aa)). The helical; Anchor for type IV membrane protein transmembrane segment at 241–261 (FCIDIILLCILLGIAAFIYNS) threads the bilayer. The Vesicular segment spans residues 262–263 (VK).

Belongs to the syntaxin family. In terms of assembly, part of the t-SNARE complex. As to expression, expressed in root, leaf, stem, flower and silique.

The protein resides in the membrane. Vesicle trafficking protein that functions in the secretory pathway. The chain is Syntaxin-73 (SYP73) from Arabidopsis thaliana (Mouse-ear cress).